The primary structure comprises 296 residues: Maltose/maltodextrin transport system permease protein MalG (296 aa).

The Cytoplasmic segment spans residues 1–12 (MAMVQPKSQKAR). Residues 13–35 (LFITHLLLLLFIAAIMFPLLMVV) form a helical membrane-spanning segment. The Periplasmic portion of the chain corresponds to 36-88 (AISLRQGNFATGSLIPEQISWDHWKLALGFSVEQADGRITPPPFPVLLWLWNS). Residues 85-281 (LWNSVKVAGI…LPITIVFLLA (197 aa)) enclose the ABC transmembrane type-1 domain. The chain crosses the membrane as a helical span at residues 89-111 (VKVAGISAIGIVALSTTCAYAFA). At 112 to 123 (RMRFPGKATLLK) the chain is on the cytoplasmic side. Residues 124 to 143 (GMLIFQMFPAVLSLVALYAL) traverse the membrane as a helical segment. Over 144 to 152 (FDRLGEYIP) the chain is Periplasmic. The helical transmembrane segment at 153 to 175 (FIGLNTHGGVIFAYLGGIALHVW) threads the bilayer. The Cytoplasmic portion of the chain corresponds to 176 to 204 (TIKGYFETIDSSLEEAAALDGATPWQAFR). A helical transmembrane segment spans residues 205 to 227 (LVLLPLSVPILAVVFILSFIAAI). Over 228 to 257 (TEVPVASLLLRDVNSYTLAVGMQQYLNPQN) the chain is Periplasmic. The helical transmembrane segment at 258 to 280 (YLWGDFAAAAVMSALPITIVFLL) threads the bilayer. Residues 281-296 (AQRWLVNGLTAGGVKG) are Cytoplasmic-facing.

The protein belongs to the binding-protein-dependent transport system permease family. MalFG subfamily. As to quaternary structure, the complex is composed of two ATP-binding proteins (MalK), two transmembrane proteins (MalG and MalF) and a solute-binding protein (MalE).

It is found in the cell inner membrane. Its function is as follows. Part of the ABC transporter complex MalEFGK involved in maltose/maltodextrin import. Probably responsible for the translocation of the substrate across the membrane. The sequence is that of Maltose/maltodextrin transport system permease protein MalG (malG) from Escherichia coli O157:H7.